The chain runs to 60 residues: Short neurotoxin 1 (60 aa).

Disulfide bonds link Cys-3–Cys-22, Cys-17–Cys-39, Cys-41–Cys-52, and Cys-53–Cys-58.

It belongs to the three-finger toxin family. Short-chain subfamily. Type I alpha-neurotoxin sub-subfamily. In terms of tissue distribution, expressed by the venom gland.

It localises to the secreted. Functionally, binds to muscle nicotinic acetylcholine receptor (nAChR) and inhibit acetylcholine from binding to the receptor, thereby impairing neuromuscular transmission. This Dendroaspis polylepis polylepis (Black mamba) protein is Short neurotoxin 1.